The chain runs to 649 residues: Quinol oxidase subunit 1 (649 aa).

The Extracellular segment spans residues 1–13 (MKFKWDEFFVTGD). The helical transmembrane segment at 14–34 (PLILGAQVSIALSTIAIIFVL) threads the bilayer. Residues 35–55 (TYFKKWKWLWSEWITTVDHKK) lie on the Cytoplasmic side of the membrane. A helical membrane pass occupies residues 56 to 76 (LGIMYIISAVIMLFRGGVDGL). The Extracellular segment spans residues 77-104 (MMRAQLALPNNSFLDSNHYNEIFTTHGT). His102 lines the Fe(II)-heme a pocket. A helical transmembrane segment spans residues 105–125 (IMIIFMAMPFLIGLINVVVPL). The Cytoplasmic segment spans residues 126–139 (QIGARDVAFPYLNN). Residues 140-160 (LSFWTFFVGAMLFNISFVIGG) traverse the membrane as a helical segment. The Extracellular segment spans residues 161-187 (SPNAGWTSYMPLASNDMSPGPGENYYL). A helical transmembrane segment spans residues 188–208 (LGLQIAGIGTLMTGINFMVTI). The Cytoplasmic segment spans residues 209 to 228 (LKMRTKGMTLMRMPMFTWTT). The chain crosses the membrane as a helical span at residues 229–249 (LITMVIIVFAFPVLTVALALL). Topologically, residues 250 to 273 (SFDRLFGAHFFTLEAGGMPMLWAN) are extracellular. A helical membrane pass occupies residues 274 to 294 (LFWIWGHPEVYIVILPAFGIF). Positions 280 and 284 each coordinate Cu cation. Residues 280–284 (HPEVY) constitute a cross-link (1'-histidyl-3'-tyrosine (His-Tyr)). Residues 295–305 (SEIISSFARKQ) lie on the Cytoplasmic side of the membrane. A helical membrane pass occupies residues 306–326 (LFGYTAMVGSIIAISVLSFLV). The Extracellular portion of the chain corresponds to 327-342 (WTHHFFTMGNSASVNS). Cu cation is bound by residues His329 and His330. Residues 343–363 (FFSITTMAISIPTGVKIFNWL) form a helical membrane-spanning segment. The Cytoplasmic portion of the chain corresponds to 364–376 (FTMYKGRISFTTP). The helical transmembrane segment at 377–397 (MLWALAFIPNFVIGGVTGVML) threads the bilayer. Over 398 to 415 (AMAAADYQYHNTYFLVSH) the chain is Extracellular. His415 contacts heme a3. A helical membrane pass occupies residues 416–436 (FHYVLIAGTVFACFAGFIFWY). Position 417 (His417) interacts with Fe(II)-heme a. Residues 437–451 (PKMFGHKLNERIGKW) lie on the Cytoplasmic side of the membrane. The helical transmembrane segment at 452-472 (FFWIFMIGFNICFFPQYFLGL) threads the bilayer. Residues 473-492 (QGMPRRIYTYGPNDGWTTLN) lie on the Extracellular side of the membrane. Residues 493–513 (FISTVGAFMMGVGFLILCYNI) traverse the membrane as a helical segment. The Cytoplasmic segment spans residues 514–585 (YYSFRYSTRE…KFKKIHMPSN (72 aa)). Residues 586 to 603 (SGRPFFMSVAFGIAGFGL) form a helical membrane-spanning segment. The Extracellular segment spans residues 604–606 (VFE). Residues 607–624 (WYWMGVVGLIGVLLCMVL) traverse the membrane as a helical segment. Over 625 to 649 (RSFEYDNGYYISVDEIKETERKISE) the chain is Cytoplasmic.

Belongs to the heme-copper respiratory oxidase family. The cofactor is Cu cation. Ferriheme a serves as cofactor. Heme A3. is required as a cofactor.

It is found in the cell membrane. It carries out the reaction 2 a quinol + O2 = 2 a quinone + 2 H2O. It participates in energy metabolism; oxidative phosphorylation. In terms of biological role, catalyzes quinol oxidation with the concomitant reduction of oxygen to water. Major component for energy conversion during vegetative growth. This is Quinol oxidase subunit 1 (qoxB) from Bacillus spizizenii (strain ATCC 23059 / NRRL B-14472 / W23) (Bacillus subtilis subsp. spizizenii).